The following is a 180-amino-acid chain: Protein PHLOEM PROTEIN 2-LIKE A9 (180 aa).

The tract at residues 1–21 is disordered; that stretch reads MSSQKSSHHKADSKMEQDNNR. The segment covering 9–21 has biased composition (basic and acidic residues); that stretch reads HKADSKMEQDNNR.

The polypeptide is Protein PHLOEM PROTEIN 2-LIKE A9 (PP2A9) (Arabidopsis thaliana (Mouse-ear cress)).